The primary structure comprises 416 residues: MYLQGFGNYHHSEAVKGALPPNQNSPQHCNLGLYAEQLSGTAFTRPRHNNLRSWLYRILPTVTQGTYYPYEFNIMHSFVDEFSPNAMRWSPLYNSSQIKCDFVEGLFHIAGSPLVNTYTYYCNHSMSDKYFANNDGELLFVPYAGEIHLYTEFGKLMLSSGSIAVIPRGVKFKVEVISKEAKGYLCENSGNPLTLPQLGPIGANGLANPRHFQYPVAAFEDSGGEHTIICKNQKKLWFTVCNHSPLNVVAWHGNYAPYCYDLSLFNTINTVSFDHPDPSIFTVLTSESEIPGVSNLDFVIFPPRWMVAEHTFRPPYFHRNYMNELMGLVYGEYDAKKEGFIPGGISIHNCMTPHGPDYESYEIAASQDLKPNYINSLAFMFETKDYWQVTEQAYRHPSRQVDYLNCWQGFKVEFSQ.

H275 functions as the Proton acceptor in the catalytic mechanism. The Fe cation site is built by H318 and E324. Homogentisate-binding residues include Y333 and H354. H354 is a Fe cation binding site.

The protein belongs to the homogentisate dioxygenase family. As to quaternary structure, hexamer; dimer of trimers. Requires Fe cation as cofactor.

The catalysed reaction is homogentisate + O2 = 4-maleylacetoacetate + H(+). The protein operates within amino-acid degradation; L-phenylalanine degradation; acetoacetate and fumarate from L-phenylalanine: step 4/6. Involved in the catabolism of homogentisate (2,5-dihydroxyphenylacetate or 2,5-OH-PhAc), a central intermediate in the degradation of phenylalanine and tyrosine. Catalyzes the oxidative ring cleavage of the aromatic ring of homogentisate to yield maleylacetoacetate. The protein is Homogentisate 1,2-dioxygenase of Legionella pneumophila (strain Corby).